The sequence spans 461 residues: RNA-binding protein ZCH321 (461 aa).

2 C3H1-type zinc fingers span residues 63-85 and 181-208; these read LCQL…HAAL and ACDF…HICK. The tract at residues 224-243 is disordered; the sequence is TSQARDGGEPGPRGAKKGSV. The MKT1-binding motif motif lies at 446-451; sequence WQHNPY.

Its function is as follows. RNA-binding protein involved in regulation of mRNA stability. Promotes mRNA stabilization by recruiting MKT1 and PBP1. Stabilizes transcripts encoding mitochondrial proteins. This is RNA-binding protein ZCH321 from Trypanosoma brucei brucei (strain 927/4 GUTat10.1).